Reading from the N-terminus, the 430-residue chain is Chaperone SurA (430 aa).

Residues 1–25 (MQIIKTTIATFTAIAFTGAASFTSA) form the signal peptide. PpiC domains are found at residues 176–277 (SPDY…KLYE) and 286–385 (VNQT…KVEE).

It is found in the periplasm. The catalysed reaction is [protein]-peptidylproline (omega=180) = [protein]-peptidylproline (omega=0). Its function is as follows. Chaperone involved in the correct folding and assembly of outer membrane proteins. Recognizes specific patterns of aromatic residues and the orientation of their side chains, which are found more frequently in integral outer membrane proteins. May act in both early periplasmic and late outer membrane-associated steps of protein maturation. This Saccharophagus degradans (strain 2-40 / ATCC 43961 / DSM 17024) protein is Chaperone SurA.